The chain runs to 492 residues: Cytochrome P450 2B19 (492 aa).

A Phosphoserine; by PKA modification is found at Ser-129. Cys-437 is a heme binding site.

It belongs to the cytochrome P450 family. The cofactor is heme. As to expression, expressed only in differentiated keratinocytes in skin.

The protein resides in the endoplasmic reticulum membrane. It is found in the microsome membrane. The catalysed reaction is an organic molecule + reduced [NADPH--hemoprotein reductase] + O2 = an alcohol + oxidized [NADPH--hemoprotein reductase] + H2O + H(+). Cytochromes P450 are a group of heme-thiolate monooxygenases. In liver microsomes, this enzyme is involved in an NADPH-dependent electron transport pathway. It oxidizes a variety of structurally unrelated compounds, including steroids, fatty acids, and xenobiotics. The polypeptide is Cytochrome P450 2B19 (Cyp2b19) (Mus musculus (Mouse)).